The following is a 162-amino-acid chain: Transcription elongation factor GreA (162 aa).

A coiled-coil region spans residues 45–74 (ENAEYEAAREKQAFIEGRIKELEDMTARAE).

Belongs to the GreA/GreB family.

Its function is as follows. Necessary for efficient RNA polymerase transcription elongation past template-encoded arresting sites. The arresting sites in DNA have the property of trapping a certain fraction of elongating RNA polymerases that pass through, resulting in locked ternary complexes. Cleavage of the nascent transcript by cleavage factors such as GreA or GreB allows the resumption of elongation from the new 3'terminus. GreA releases sequences of 2 to 3 nucleotides. The polypeptide is Transcription elongation factor GreA (Rickettsia typhi (strain ATCC VR-144 / Wilmington)).